Here is a 411-residue protein sequence, read N- to C-terminus: Dual specificity protein phosphatase Mpk3 (411 aa).

The Rhodanese domain occupies 22-149; the sequence is DSKDLILLDC…FRQAFPEWCE (128 aa). The segment covering 184-197 has biased composition (low complexity); the sequence is DSACSSSAESSDCE. Residues 184–209 are disordered; the sequence is DSACSSSAESSDCESSSHHHHHHSHH. In terms of domain architecture, Tyrosine-protein phosphatase spans 214-358; sequence APVEIIPGLL…LLSFESQLRL (145 aa). Cys-302 functions as the Phosphocysteine intermediate in the catalytic mechanism.

It belongs to the protein-tyrosine phosphatase family. Non-receptor class dual specificity subfamily. Interacts (via N-terminal region) with phosphorylated rl. In terms of tissue distribution, ubiquitous expression in eye and wing imaginal disks. Enriched in ovary.

The protein localises to the cytoplasm. The enzyme catalyses O-phospho-L-tyrosyl-[protein] + H2O = L-tyrosyl-[protein] + phosphate. It carries out the reaction O-phospho-L-seryl-[protein] + H2O = L-seryl-[protein] + phosphate. It catalyses the reaction O-phospho-L-threonyl-[protein] + H2O = L-threonyl-[protein] + phosphate. With respect to regulation, activity abolished by tyrosine phosphatase inhibitor sodium vanadate. Activated by rl. Functionally, negatively regulates the activity of members of the MAP kinase family in response to changes in the cellular environment. Has a specificity for the ERK family. Acts as a negative regulator in a variety of developmental processes including cell differentiation and proliferation controlled by the Ras/ERK pathway. Suppresses the photoreceptor cell differentiation and wing vein formation. Required for proper oogenesis and early embryogenesis. Functions autonomously in a subset of photoreceptor progenitor cells in eye imaginal disks. Also appears to be required in surrounding non-neuronal cells for ommatidial patterning and photoreceptor differentiation. Plays a role in the maintenance of epithelial integrity during tracheal development. This is Dual specificity protein phosphatase Mpk3 (Mkp3) from Drosophila melanogaster (Fruit fly).